An 87-amino-acid polypeptide reads, in one-letter code: RNA-binding protein Hfq (87 aa).

The Sm domain occupies 9–68; sequence DPFLNTLRRERIPVSIYLVNGIKLQGYIESFDQFVILLKNSISQMIYKHAISTVVPNHTN. The segment at 66-87 is disordered; that stretch reads HTNNQEHNQSQYNNNNACISKP.

Belongs to the Hfq family. In terms of assembly, homohexamer.

Functionally, RNA chaperone that binds small regulatory RNA (sRNAs) and mRNAs to facilitate mRNA translational regulation in response to envelope stress, environmental stress and changes in metabolite concentrations. Also binds with high specificity to tRNAs. This Wigglesworthia glossinidia brevipalpis protein is RNA-binding protein Hfq.